Here is a 305-residue protein sequence, read N- to C-terminus: J domain-containing protein 1 (305 aa).

The J domain maps to 91–163 (TPYEVLGLVK…SRRRMYDMYA (73 aa)). The chain crosses the membrane as a helical span at residues 212 to 232 (WGMVVWALCMLAGFQVMAFLI).

This sequence belongs to the DnaJ family.

It localises to the mitochondrion membrane. Functionally, probable chaperone. The protein is J domain-containing protein 1 (JID1) of Eremothecium gossypii (strain ATCC 10895 / CBS 109.51 / FGSC 9923 / NRRL Y-1056) (Yeast).